A 512-amino-acid polypeptide reads, in one-letter code: Phosphoenolpyruvate carboxylase (512 aa).

Belongs to the PEPCase type 2 family. As to quaternary structure, homotetramer. The cofactor is Mg(2+).

The catalysed reaction is oxaloacetate + phosphate = phosphoenolpyruvate + hydrogencarbonate. Catalyzes the irreversible beta-carboxylation of phosphoenolpyruvate (PEP) to form oxaloacetate (OAA), a four-carbon dicarboxylic acid source for the tricarboxylic acid cycle. The polypeptide is Phosphoenolpyruvate carboxylase (Caldivirga maquilingensis (strain ATCC 700844 / DSM 13496 / JCM 10307 / IC-167)).